A 93-amino-acid chain; its full sequence is Protein FptB (93 aa).

Positions 1-25 (MPRQSGFGWAWRVPLALAGSLAAAT) are cleaved as a signal peptide. 2 consecutive transmembrane segments (helical) span residues 44–64 (LYAGLFGALGVGLLLLVGGLL) and 71–91 (FAWRLGGSLLVLGLALWLLAG).

Its subcellular location is the cell membrane. May play some role in transport of Fe(3+)-pyochelin. The sequence is that of Protein FptB (fptB) from Pseudomonas aeruginosa (strain ATCC 15692 / DSM 22644 / CIP 104116 / JCM 14847 / LMG 12228 / 1C / PRS 101 / PAO1).